The sequence spans 869 residues: Dimethylglycine dehydrogenase, mitochondrial (869 aa).

The N-terminal 43 residues, 1-43 (MLRPGALRLRGLALRGSPRRPSSAGLREGQESPASPPEWKDRA), are a transit peptide targeting the mitochondrion. The disordered stretch occupies residues 14-39 (LRGSPRRPSSAGLREGQESPASPPEW). FAD is bound by residues 52-53 (CV), 73-74 (EK), and 80-88 (GSTWHAAGL). At His-84 the chain carries Tele-8alpha-FAD histidine. The residue at position 107 (Lys-107) is an N6-acetyllysine. Residue Lys-141 is modified to N6-acetyllysine; alternate. Lys-141 is modified (N6-succinyllysine; alternate). Lys-161 carries the N6-acetyllysine modification. Val-212 is an FAD binding site. Position 216 is an N6-acetyllysine (Lys-216). Trp-244 contacts FAD. 2 positions are modified to N6-succinyllysine: Lys-310 and Lys-312. N6-acetyllysine is present on residues Lys-328 and Lys-353. Residue 390–395 (FGYGII) coordinates FAD. Residues Lys-427, Lys-469, and Lys-516 each carry the N6-acetyllysine; alternate modification. Lys-427, Lys-469, and Lys-516 each carry N6-succinyllysine; alternate. 573–575 (ELT) is a (6S)-5,6,7,8-tetrahydrofolate binding site. Lys-648 is modified (N6-acetyllysine; alternate). Lys-648 bears the N6-succinyllysine; alternate mark. (6S)-5,6,7,8-tetrahydrofolate-binding positions include Tyr-669, 676 to 678 (ELY), and Tyr-737. Lys-757 bears the N6-acetyllysine mark. An N6-acetyllysine; alternate modification is found at Lys-786. Lys-786 is subject to N6-succinyllysine; alternate. Position 788 is an N6-succinyllysine (Lys-788).

It belongs to the GcvT family. FAD serves as cofactor.

It is found in the mitochondrion. The catalysed reaction is (6S)-5,6,7,8-tetrahydrofolyl-(gamma-L-Glu)(n) + N,N-dimethylglycine + oxidized [electron-transfer flavoprotein] + H(+) = (6R)-5,10-methylenetetrahydrofolyl-(gamma-L-Glu)(n) + sarcosine + reduced [electron-transfer flavoprotein]. It functions in the pathway amine and polyamine degradation; betaine degradation; sarcosine from betaine: step 2/2. Catalyzes the demethylation of N,N-dimethylglycine to sarcosine. Also has activity with sarcosine in vitro. The chain is Dimethylglycine dehydrogenase, mitochondrial (Dmgdh) from Mus musculus (Mouse).